The following is a 356-amino-acid chain: Fructose-1,6-bisphosphatase class 1 (356 aa).

Residues 1-26 (MAREWPMTHPSNHPMDHHHQTLQAHL) form a disordered region. Positions 101, 120, 122, and 123 each coordinate Mg(2+). Substrate-binding positions include 123 to 126 (DGSS) and Asn-211. Residue Glu-283 participates in Mg(2+) binding.

The protein belongs to the FBPase class 1 family. In terms of assembly, homotetramer. The cofactor is Mg(2+).

It is found in the cytoplasm. It catalyses the reaction beta-D-fructose 1,6-bisphosphate + H2O = beta-D-fructose 6-phosphate + phosphate. It participates in carbohydrate biosynthesis; Calvin cycle. The chain is Fructose-1,6-bisphosphatase class 1 from Bradyrhizobium sp. (strain ORS 278).